A 435-amino-acid polypeptide reads, in one-letter code: Transmembrane protease serine 4 (435 aa).

The Cytoplasmic portion of the chain corresponds to methionine 1–valine 30. Residues glycine 31–isoleucine 51 form a helical; Signal-anchor for type II membrane protein membrane-spanning segment. Topologically, residues lysine 52–methionine 435 are extracellular. In terms of domain architecture, LDL-receptor class A spans tyrosine 59–alanine 101. Intrachain disulfides connect cysteine 62-cysteine 81, cysteine 75-cysteine 90, cysteine 125-cysteine 181, cysteine 138-cysteine 191, cysteine 194-cysteine 308, cysteine 228-cysteine 244, cysteine 354-cysteine 370, and cysteine 381-cysteine 408. Positions valine 102–arginine 202 constitute an SRCR domain. Residues asparagine 128 and asparagine 176 are each glycosylated (N-linked (GlcNAc...) asparagine). One can recognise a Peptidase S1 domain in the interval valine 203–lysine 432. Residues histidine 243 and aspartate 288 each act as charge relay system in the active site. Serine 385 functions as the Charge relay system in the catalytic mechanism.

Belongs to the peptidase S1 family. In terms of processing, proteolytically processed; probably by an autocatalytic mechanism.

The protein resides in the cell membrane. It localises to the secreted. In terms of biological role, plasma membrane-anchored serine protease that directly induces processing of pro-uPA/PLAU into the active form through proteolytic activity. Seems to be capable of activating ENaC. In Mus musculus (Mouse), this protein is Transmembrane protease serine 4.